A 1024-amino-acid chain; its full sequence is Beta-galactosidase (1024 aa).

Substrate contacts are provided by Asn100 and Asp198. Asp198 contributes to the Na(+) binding site. The Mg(2+) site is built by Glu414, His416, and Glu459. Substrate contacts are provided by residues Glu459 and 535–538 (EYAH). Catalysis depends on Glu459, which acts as the Proton donor. Glu535 acts as the Nucleophile in catalysis. Asn595 contacts Mg(2+). Na(+)-binding residues include Phe599 and Asn602. Residues Asn602 and Trp995 each contribute to the substrate site.

The protein belongs to the glycosyl hydrolase 2 family. As to quaternary structure, homotetramer. Mg(2+) serves as cofactor. Requires Na(+) as cofactor.

It carries out the reaction Hydrolysis of terminal non-reducing beta-D-galactose residues in beta-D-galactosides.. This is Beta-galactosidase from Vibrio cholerae serotype O1 (strain ATCC 39541 / Classical Ogawa 395 / O395).